Here is a 56-residue protein sequence, read N- to C-terminus: Attractin (56 aa).

3 disulfides stabilise this stretch: cysteine 4–cysteine 41, cysteine 13–cysteine 33, and cysteine 20–cysteine 26. The N-linked (GlcNAc...) asparagine glycan is linked to asparagine 25.

As to expression, produced by the albumen gland of the egg cordons.

Its subcellular location is the secreted. Functionally, water-borne pheromone that attract the marine mollusk Aplysia into breeding aggregations and coordinate male and female reproductive behavior within the aggregation. This chain is Attractin (ATT), found in Aplysia depilans (Sea hare).